The chain runs to 1044 residues: Integrin alpha-8 (1044 aa).

Positions 1–23 are cleaved as a signal peptide; the sequence is MPRRQPPRPLLLLSALLCAPASA. Residues 24–991 are Extracellular-facing; sequence FNLDEEKLTV…WSTPNVSFVI (968 aa). FG-GAP repeat units follow at residues 28 to 90, 104 to 165, 170 to 222, 236 to 288, 289 to 354, 355 to 413, and 417 to 480; these read EEKL…RCRQ, NGTR…AYAE, RNSN…ITNY, QTGV…SSDL, TFIQ…FLFR, DPQI…GLKT, and QVLN…LNPM. Residue N66 is glycosylated (N-linked (GlcNAc...) asparagine). A disulfide bridge links C81 with C88. N-linked (GlcNAc...) asparagine glycosylation is present at N104. C132 and C153 are oxidised to a cystine. A glycan (N-linked (GlcNAc...) asparagine) is linked at N159. Residues C169 and C182 are joined by a disulfide bond. N221 is a glycosylation site (N-linked (GlcNAc...) asparagine). E257, T259, D261, and E265 together coordinate Ca(2+). 2 N-linked (GlcNAc...) asparagine glycosylation sites follow: N284 and N293. Residues D311, N313, D315, L317, D319, D377, N379, D381, Y383, and D385 each coordinate Ca(2+). Residues 437-439 carry the Cell attachment site motif; the sequence is RGD. 5 residues coordinate Ca(2+): D441, D443, N445, Y447, and D449. The N-linked (GlcNAc...) asparagine glycan is linked to N486. 2 disulfide bridges follow: C489-C500 and C506-C562. N587 carries an N-linked (GlcNAc...) asparagine glycan. Disulfide bonds link C623/C629 and C695/C708. Residues N701, N719, N751, N762, N818, N877, and N904 are each glycosylated (N-linked (GlcNAc...) asparagine). Cystine bridges form between C849/C905 and C910/C915. 2 N-linked (GlcNAc...) asparagine glycosylation sites follow: N952 and N986. Residues 992 to 1015 form a helical membrane-spanning segment; it reads PLWVIILAIMLGLLVLAVLTLALW. At 1016–1044 the chain is on the cytoplasmic side; that stretch reads KCGFFDRARPPQDDMADREQLTNNKTTDA.

The protein belongs to the integrin alpha chain family. Heterodimer of an alpha and a beta subunit. The alpha subunit is composed of a heavy and a light chain linked by a disulfide bond. Alpha-8 associates with beta-1. As to expression, prominently expressed on axons and on cells in contact with basal laminae in embryos.

The protein localises to the membrane. The protein resides in the cell membrane. Its function is as follows. Integrin alpha-8/beta-1 functions in the genesis of kidney and probably of other organs by regulating the recruitment of mesenchymal cells into epithelial structures. It recognizes the sequence R-G-D in a wide array of ligands including TNC, FN1, SPP1, TGFB1, TGFB3 and VTN. NPNT is probably its functional ligand in kidney genesis. Neuronal receptor for TNC it mediates cell-cell interactions and regulates neurite outgrowth of sensory and motor neurons. This is Integrin alpha-8 (ITGA8) from Gallus gallus (Chicken).